The following is a 477-amino-acid chain: MYFSSYQNLRKRLLSREISCETVVLDYLERIRKNHERNVYITVFNDQALQRAKELDRKLEAGEQPGRLFGLPMAVKDNLSVKDASLTCASKILEGYTAVYNATAVERLLKEDAVFLGKVNMDEFAMGSSNENSAFGPVPNPYDDSRVPGGSSGGSAAAVAGDLAMVALGSDTGGSVRQPAGFCNVVGLKPTYGRISRYGLVAFGSSFDQIGILSRNCDDAALVLGVIAGKDAADTTSSQHVVPDYLSEMGSVSLKGMKIGVPEEYFPETLDPGVALAVRNRLEELRDAGAELVDIALPESDHAIAAYYILTTAEASSNLARFDGARYGYRSGDASDLSGMYVNSRSEGFGGEVKRRIMLGTYVLSAGYYDTYYKKAQQVRRVFLDRYKEALAKVDVIAGPTSPFPPFGIGDKMDEPLEMYLADVFTVPASIAGLPALSVPAGFDRSGLPVGLQLIGDFFDEGKLLGIAREIQRSQEE.

Catalysis depends on charge relay system residues K76 and S151. S175 acts as the Acyl-ester intermediate in catalysis.

This sequence belongs to the amidase family. GatA subfamily. Heterotrimer of A, B and C subunits.

The enzyme catalyses L-glutamyl-tRNA(Gln) + L-glutamine + ATP + H2O = L-glutaminyl-tRNA(Gln) + L-glutamate + ADP + phosphate + H(+). Functionally, allows the formation of correctly charged Gln-tRNA(Gln) through the transamidation of misacylated Glu-tRNA(Gln) in organisms which lack glutaminyl-tRNA synthetase. The reaction takes place in the presence of glutamine and ATP through an activated gamma-phospho-Glu-tRNA(Gln). This Chlorobium phaeobacteroides (strain BS1) protein is Glutamyl-tRNA(Gln) amidotransferase subunit A.